We begin with the raw amino-acid sequence, 24 residues long: Pyruvate kinase (24 aa).

This sequence belongs to the pyruvate kinase family. As to quaternary structure, homotetramer. The cofactor is Mg(2+). Requires K(+) as cofactor.

The enzyme catalyses pyruvate + ATP = phosphoenolpyruvate + ADP + H(+). It participates in carbohydrate degradation; glycolysis; pyruvate from D-glyceraldehyde 3-phosphate: step 5/5. This Clostridium pasteurianum protein is Pyruvate kinase (pyk).